The following is a 102-amino-acid chain: Carboxysome shell protein CcmK3 (102 aa).

In terms of domain architecture, BMC spans 4–90 (AVGTIQTLGF…PQENVETVMP (87 aa)).

This sequence belongs to the bacterial microcompartments protein family. CcmK subfamily. Interacts stably with CcmK4, probably forms heterohexamers with a 1:2 CcmK3:CcmK4 stoichiometry. Bulky residues in the pore region probably preclude the formation of homohexamers by this subunit.

It localises to the carboxysome. Its function is as follows. A non-essential, minor shell protein of the carboxysome, a polyhedral inclusion where RuBisCO (ribulose bisphosphate carboxylase, rbcL-rbcS) is sequestered. Hexamers form sheets that form the facets of the polyhedral carboxysome. In PCC 7942 there are several CcmK paralogs with presumably functional differences. This subunit probably only makes heterohexamers with CcmK4. The CcmK3-CcmK4 heterohexmers have been suggested to cap other hexamers, perhaps to alter metabolite flux. The protein is Carboxysome shell protein CcmK3 of Synechococcus elongatus (strain ATCC 33912 / PCC 7942 / FACHB-805) (Anacystis nidulans R2).